The sequence spans 257 residues: Type III pantothenate kinase (257 aa).

Asp-6 to Val-13 provides a ligand contact to ATP. Substrate is bound by residues Tyr-102 and Gly-109 to Arg-112. The active-site Proton acceptor is Asp-111. Asp-131 is a binding site for K(+). Thr-134 lines the ATP pocket. Substrate is bound at residue Thr-186.

Belongs to the type III pantothenate kinase family. Homodimer. The cofactor is NH4(+). Requires K(+) as cofactor.

The protein localises to the cytoplasm. The catalysed reaction is (R)-pantothenate + ATP = (R)-4'-phosphopantothenate + ADP + H(+). The protein operates within cofactor biosynthesis; coenzyme A biosynthesis; CoA from (R)-pantothenate: step 1/5. Its function is as follows. Catalyzes the phosphorylation of pantothenate (Pan), the first step in CoA biosynthesis. This Leptospira interrogans serogroup Icterohaemorrhagiae serovar copenhageni (strain Fiocruz L1-130) protein is Type III pantothenate kinase.